A 111-amino-acid chain; its full sequence is Integration host factor subunit alpha (111 aa).

It belongs to the bacterial histone-like protein family. Heterodimer of an alpha and a beta chain.

In terms of biological role, this protein is one of the two subunits of integration host factor, a specific DNA-binding protein that functions in genetic recombination as well as in transcriptional and translational control. The polypeptide is Integration host factor subunit alpha (Chelativorans sp. (strain BNC1)).